A 203-amino-acid chain; its full sequence is Probable nicotinate-nucleotide adenylyltransferase (203 aa).

It belongs to the NadD family.

It catalyses the reaction nicotinate beta-D-ribonucleotide + ATP + H(+) = deamido-NAD(+) + diphosphate. The protein operates within cofactor biosynthesis; NAD(+) biosynthesis; deamido-NAD(+) from nicotinate D-ribonucleotide: step 1/1. In terms of biological role, catalyzes the reversible adenylation of nicotinate mononucleotide (NaMN) to nicotinic acid adenine dinucleotide (NaAD). The polypeptide is Probable nicotinate-nucleotide adenylyltransferase (Prosthecochloris aestuarii (strain DSM 271 / SK 413)).